A 673-amino-acid polypeptide reads, in one-letter code: tRNA uridine 5-carboxymethylaminomethyl modification enzyme MnmG (673 aa).

17-22 contributes to the FAD binding site; sequence GGGHAG. 284-298 serves as a coordination point for NAD(+); that stretch reads GPRYCPSVEDKINRF.

The protein belongs to the MnmG family. Homodimer. Heterotetramer of two MnmE and two MnmG subunits. It depends on FAD as a cofactor.

The protein localises to the cytoplasm. In terms of biological role, NAD-binding protein involved in the addition of a carboxymethylaminomethyl (cmnm) group at the wobble position (U34) of certain tRNAs, forming tRNA-cmnm(5)s(2)U34. This chain is tRNA uridine 5-carboxymethylaminomethyl modification enzyme MnmG, found in Polaromonas sp. (strain JS666 / ATCC BAA-500).